The primary structure comprises 224 residues: Heme response regulator HssR (224 aa).

A Response regulatory domain is found at 3 to 116 (QCLVVDDDPR…ELIFRIRAVL (114 aa)). Position 52 is a 4-aspartylphosphate (Asp52). Residues 124 to 222 (NSEMTIGNLT…VRGQGYKVEN (99 aa)) constitute a DNA-binding region (ompR/PhoB-type).

In terms of processing, phosphorylated by HssS.

Its subcellular location is the cytoplasm. Its function is as follows. Member of the two-component regulatory system HssS/HssR involved in intracellular heme homeostasis and tempering of staphylococcal virulence. Phosphorylated HssR binds to a direct repeat sequence within hrtAB promoter and activates the expression of hrtAB, an efflux pump, in response to extracellular heme, hemin, hemoglobin or blood. This is Heme response regulator HssR (hssR) from Staphylococcus aureus (strain Mu50 / ATCC 700699).